The sequence spans 121 residues: Small ribosomal subunit protein uS13 (121 aa).

Positions 96 to 121 (PVRGQNTKNNARTRKGKAVAIAGKKK) are disordered. The segment covering 106–121 (ARTRKGKAVAIAGKKK) has biased composition (basic residues).

The protein belongs to the universal ribosomal protein uS13 family. As to quaternary structure, part of the 30S ribosomal subunit. Forms a loose heterodimer with protein S19. Forms two bridges to the 50S subunit in the 70S ribosome.

In terms of biological role, located at the top of the head of the 30S subunit, it contacts several helices of the 16S rRNA. In the 70S ribosome it contacts the 23S rRNA (bridge B1a) and protein L5 of the 50S subunit (bridge B1b), connecting the 2 subunits; these bridges are implicated in subunit movement. Contacts the tRNAs in the A and P-sites. In Streptococcus pneumoniae serotype 4 (strain ATCC BAA-334 / TIGR4), this protein is Small ribosomal subunit protein uS13.